Here is a 355-residue protein sequence, read N- to C-terminus: Gentisate 1,2-dioxygenase (355 aa).

A Cupin type-2 domain is found at M106–V174.

This sequence belongs to the gentisate 1,2-dioxygenase family.

The catalysed reaction is 2,5-dihydroxybenzoate + O2 = 3-maleylpyruvate + H(+). Its pathway is aromatic compound metabolism; naphthalene degradation. In terms of biological role, catalyzes the oxygen-dependent ring fission of gentisate between the carboxyl and proximal hydroxyl groups at positions 1 and 2 of the aromatic ring to form maleylpyruvate. Can also catalyze oxidation of alkyl- and halogenated gentisates. Exhibits higher affinity for 3-substituted gentisates than for gentisate but has higher activity with gentisate. This chain is Gentisate 1,2-dioxygenase, found in Ralstonia sp.